Reading from the N-terminus, the 358-residue chain is UPF0725 protein At4g29550 (358 aa).

The tract at residues 31–82 is disordered; the sequence is LNKHPPSGSGWTDEDDDNDDVFSSSFISKEELSDAVHNDPPSGWTDEDDDDQ. The span at 58 to 67 shows a compositional bias: basic and acidic residues; that stretch reads SKEELSDAVH.

It belongs to the UPF0725 (EMB2204) family.

The sequence is that of UPF0725 protein At4g29550 from Arabidopsis thaliana (Mouse-ear cress).